The chain runs to 447 residues: MRVVHVASEVFPFSRSGGLGDVLAALPAEQARLGANVTVVSPWYATLSGTPQEVWRGEVPGLGPVGVGELRASGVRFLFVSLPAFERPGLYHPDDVERFCAFGRAVLPVLQALGAVPDVLHGHDWQAGLVVAHAHLAGWRTAFTIHNLQYQGRWNLAEARTWTGLPDWTFSPEGVEFYGDLNLMKAGLVFAEQVTTVSPTYAREITTPQYGEGLEGVLIRLALEGRLSGILNGLDQDRWNPRTDPDIRPYADPAGKAANGSVLRAEFGLDDAPILGVVSRLANQKGIDLLIEALPELVERWNVVVLGGGDPLLTAALHGWAYHPRVAFVSGLNEALAHRIYAGADAFAMPSRFEPCGLSQMIALRYGTLPIVRETGGLVDTVPGDVGFRFADATTEALATACRDARTTLEDVVEWQSRMKRGMELDFSWEGSARHYLALYRHLCSVN.

Residue arginine 15 participates in ADP-alpha-D-glucose binding.

Belongs to the glycosyltransferase 1 family. Bacterial/plant glycogen synthase subfamily.

The catalysed reaction is [(1-&gt;4)-alpha-D-glucosyl](n) + ADP-alpha-D-glucose = [(1-&gt;4)-alpha-D-glucosyl](n+1) + ADP + H(+). The protein operates within glycan biosynthesis; glycogen biosynthesis. Synthesizes alpha-1,4-glucan chains using ADP-glucose. The sequence is that of Glycogen synthase from Deinococcus geothermalis (strain DSM 11300 / CIP 105573 / AG-3a).